The chain runs to 411 residues: Multidrug resistance protein MdtG (411 aa).

10 consecutive transmembrane segments (helical) span residues 14–34 (LFVA…IMPF), 56–76 (LVFS…GGLA), 89–109 (ALGM…WQFL), 113–133 (AVLG…ATQV), 144–164 (TLST…GLLA), 171–191 (PVFY…LLYV), 219–239 (ILSL…IAPI), 254–274 (LAFV…MSAP), 288–308 (ILVF…FVQT), and 376–396 (AVFC…WWCL).

This sequence belongs to the major facilitator superfamily. DHA1 family. MdtG (TC 2.A.1.2.20) subfamily.

The protein localises to the cell inner membrane. This chain is Multidrug resistance protein MdtG, found in Serratia proteamaculans (strain 568).